The sequence spans 281 residues: uncharacterized protein (281 aa).

Disordered stretches follow at residues 192 to 212 (SNSS…IQET) and 227 to 281 (EDYV…SEEY). The span at 200 to 211 (MDKKSDDSKIQE) shows a compositional bias: basic and acidic residues. Acidic residues-rich tracts occupy residues 227 to 240 (EDYV…ISDN) and 249 to 260 (DTDSDLGDLEDP).

This sequence belongs to the cullin family.

This is an uncharacterized protein from Acanthamoeba polyphaga (Amoeba).